Reading from the N-terminus, the 369-residue chain is Fructose-bisphosphate aldolase 2 (369 aa).

Residue Asp40 participates in dihydroxyacetone phosphate binding. D-glyceraldehyde 3-phosphate-binding residues include Ser42 and Thr45. Arg49 serves as a coordination point for beta-D-fructose 1,6-bisphosphate. Lys113 serves as a coordination point for D-glyceraldehyde 3-phosphate. Residue Lys152 coordinates dihydroxyacetone phosphate. Residue Glu195 participates in D-glyceraldehyde 3-phosphate binding. Glu195 functions as the Proton acceptor in the catalytic mechanism. Residues Lys237, Ser279, and Gly280 each coordinate dihydroxyacetone phosphate. Residue Lys237 is the Schiff-base intermediate with dihydroxyacetone phosphate of the active site. Beta-D-fructose 1,6-bisphosphate is bound by residues Ser279–Gly281 and Ser307. Positions 309 and 310 each coordinate dihydroxyacetone phosphate. Arg310 serves as a coordination point for beta-D-fructose 1,6-bisphosphate.

Belongs to the class I fructose-bisphosphate aldolase family.

It is found in the cytoplasm. The protein resides in the membrane. The protein localises to the host cell membrane. The catalysed reaction is beta-D-fructose 1,6-bisphosphate = D-glyceraldehyde 3-phosphate + dihydroxyacetone phosphate. It functions in the pathway carbohydrate degradation; glycolysis; D-glyceraldehyde 3-phosphate and glycerone phosphate from D-glucose: step 4/4. Functionally, plays a key role in glycolysis by catalyzing the cleavage of fructose 1,6-bisphosphate into dihydroxyacetone phosphate and glyceraldehyde 3-phosphate. This Plasmodium berghei (strain Anka) protein is Fructose-bisphosphate aldolase 2 (ALDO2).